Reading from the N-terminus, the 207-residue chain is Large ribosomal subunit protein uL4 (207 aa).

The disordered stretch occupies residues leucine 44–serine 77. Residues glycine 60–glycine 71 show a composition bias toward basic residues.

This sequence belongs to the universal ribosomal protein uL4 family. In terms of assembly, part of the 50S ribosomal subunit.

One of the primary rRNA binding proteins, this protein initially binds near the 5'-end of the 23S rRNA. It is important during the early stages of 50S assembly. It makes multiple contacts with different domains of the 23S rRNA in the assembled 50S subunit and ribosome. In terms of biological role, forms part of the polypeptide exit tunnel. This is Large ribosomal subunit protein uL4 from Shouchella clausii (strain KSM-K16) (Alkalihalobacillus clausii).